We begin with the raw amino-acid sequence, 378 residues long: Probable pectin lyase A (378 aa).

Positions 1–19 are cleaved as a signal peptide; the sequence is MKFPAFITAIISIASLSSA. Cystine bridges form between Cys82–Cys101 and Cys91–Cys225. Arg255 is a catalytic residue. Residues Cys321 and Cys329 are joined by a disulfide bond.

It belongs to the polysaccharide lyase 1 family.

The protein resides in the secreted. It catalyses the reaction Eliminative cleavage of (1-&gt;4)-alpha-D-galacturonan methyl ester to give oligosaccharides with 4-deoxy-6-O-methyl-alpha-D-galact-4-enuronosyl groups at their non-reducing ends.. Functionally, pectinolytic enzymes consist of four classes of enzymes: pectin lyase, polygalacturonase, pectin methylesterase and rhamnogalacturonase. Among pectinolytic enzymes, pectin lyase is the most important in depolymerization of pectin, since it cleaves internal glycosidic bonds of highly methylated pectins. The chain is Probable pectin lyase A (pelA) from Aspergillus terreus (strain NIH 2624 / FGSC A1156).